The sequence spans 243 residues: Carboxy-S-adenosyl-L-methionine synthase (243 aa).

S-adenosyl-L-methionine-binding positions include Y39, 64-66, 90-91, 118-119, N133, and R200; these read GCS, DN, and DL.

It belongs to the class I-like SAM-binding methyltransferase superfamily. Cx-SAM synthase family. As to quaternary structure, homodimer.

It catalyses the reaction prephenate + S-adenosyl-L-methionine = carboxy-S-adenosyl-L-methionine + 3-phenylpyruvate + H2O. In terms of biological role, catalyzes the conversion of S-adenosyl-L-methionine (SAM) to carboxy-S-adenosyl-L-methionine (Cx-SAM). In Idiomarina loihiensis (strain ATCC BAA-735 / DSM 15497 / L2-TR), this protein is Carboxy-S-adenosyl-L-methionine synthase.